Reading from the N-terminus, the 146-residue chain is Large ribosomal subunit protein uL15 (146 aa).

The disordered stretch occupies residues 1–56; sequence MRLHDLRPVPGSRQKPTRKGQGIGSGLGKTAGRGQKGQKARSGGGVRPGFEGGQMP. Composition is skewed to gly residues over residues 21–35 and 42–52; these read QGIGSGLGKTAGRGQ and SGGGVRPGFEG.

This sequence belongs to the universal ribosomal protein uL15 family. In terms of assembly, part of the 50S ribosomal subunit.

Functionally, binds to the 23S rRNA. The protein is Large ribosomal subunit protein uL15 of Carboxydothermus hydrogenoformans (strain ATCC BAA-161 / DSM 6008 / Z-2901).